A 645-amino-acid chain; its full sequence is DNA mismatch repair protein MutL (645 aa).

Belongs to the DNA mismatch repair MutL/HexB family.

Functionally, this protein is involved in the repair of mismatches in DNA. It is required for dam-dependent methyl-directed DNA mismatch repair. May act as a 'molecular matchmaker', a protein that promotes the formation of a stable complex between two or more DNA-binding proteins in an ATP-dependent manner without itself being part of a final effector complex. In Geobacillus thermodenitrificans (strain NG80-2), this protein is DNA mismatch repair protein MutL.